We begin with the raw amino-acid sequence, 280 residues long: UPF0494 membrane protein C750.06c (280 aa).

4 helical membrane passes run 107-127, 144-164, 178-198, and 199-219; these read WPLL…KFEV, IWVP…SLIF, VIIA…GMII, and AALG…LYFG.

The protein belongs to the UPF0494 family.

The protein resides in the cytoplasm. It localises to the vacuole. It is found in the membrane. This chain is UPF0494 membrane protein C750.06c, found in Schizosaccharomyces pombe (strain 972 / ATCC 24843) (Fission yeast).